The following is a 222-amino-acid chain: MSKGDRPGLLLPFENKRIIRIRNSVYTETETPQRVYGEEITKINNRTYREWDPRRSKPAAAILNGLRRFPIRENDSVLYLGASTGTTISHISDICPAGTIYGVEVSYEPFSKLLDLAKKRNNLYPILEDANSPEKYSFFIEHVDVMYQDISQRNQIQIFKNNVNTFNPKRGFLVLKIRSVKSTEDSRSILNTAMDQLSVYHLKEVINLKPYDTDHYLITLDT.

S-adenosyl-L-methionine-binding positions include 86–87 (TT), 104–105 (EV), 129–130 (DA), and 149–152 (DISQ).

Belongs to the methyltransferase superfamily. Fibrillarin family. Interacts with nop5. Component of box C/D small ribonucleoprotein (sRNP) particles that contain rpl7ae, FlpA and nop5, plus a guide RNA.

Functionally, involved in pre-rRNA and tRNA processing. Utilizes the methyl donor S-adenosyl-L-methionine to catalyze the site-specific 2'-hydroxyl methylation of ribose moieties in rRNA and tRNA. Site specificity is provided by a guide RNA that base pairs with the substrate. Methylation occurs at a characteristic distance from the sequence involved in base pairing with the guide RNA. The polypeptide is Fibrillarin-like rRNA/tRNA 2'-O-methyltransferase (Thermoplasma volcanium (strain ATCC 51530 / DSM 4299 / JCM 9571 / NBRC 15438 / GSS1)).